A 659-amino-acid polypeptide reads, in one-letter code: DNA ligase (659 aa).

NAD(+) contacts are provided by residues 32–36, 81–82, and Glu110; these read DQQYD and SL. The active-site N6-AMP-lysine intermediate is the Lys112. NAD(+) contacts are provided by Arg133, Glu167, Lys282, and Lys306. 4 residues coordinate Zn(2+): Cys399, Cys402, Cys415, and Cys420. The BRCT domain maps to 582-659; that stretch reads IKNNIFKNKK…QEHEFEELIK (78 aa).

This sequence belongs to the NAD-dependent DNA ligase family. LigA subfamily. It depends on Mg(2+) as a cofactor. Requires Mn(2+) as cofactor.

It carries out the reaction NAD(+) + (deoxyribonucleotide)n-3'-hydroxyl + 5'-phospho-(deoxyribonucleotide)m = (deoxyribonucleotide)n+m + AMP + beta-nicotinamide D-nucleotide.. DNA ligase that catalyzes the formation of phosphodiester linkages between 5'-phosphoryl and 3'-hydroxyl groups in double-stranded DNA using NAD as a coenzyme and as the energy source for the reaction. It is essential for DNA replication and repair of damaged DNA. This Phytoplasma mali (strain AT) protein is DNA ligase.